The chain runs to 720 residues: Engulfment and cell motility protein 2 (720 aa).

At Tyr48 the chain carries Phosphotyrosine. The ELMO domain maps to 311–485 (AQRDIIFELR…VVREQITRAL (175 aa)). The residue at position 503 (Ser503) is a Phosphoserine. The 122-residue stretch at 553-674 (SSFRKIGNRR…LLGKDMSSEL (122 aa)) folds into the PH domain. The SH3-binding signature appears at 700-707 (PEAPPPIP). Phosphotyrosine is present on Tyr717.

Interacts with the SH3-domain of DOCK1 via its SH3-binding site. Probably part of a complex with DOCK1 and RAC1. Probably part of a complex with DOCK1 and CRK isoform CRK-II. Interacts with ARHGEF16, DOCK4 and EPHA2; mediates activation of RAC1 by EPHA2. Interacts with ADGRB3. Interacts with AUTS2; the interaction is direct. As to expression, widely expressed, with a higher expression in skeletal muscle, kidney and placenta.

The protein localises to the cytoplasm. The protein resides in the cytosol. Its subcellular location is the membrane. Its function is as follows. Involved in cytoskeletal rearrangements required for phagocytosis of apoptotic cells and cell motility. Acts in association with DOCK1 and CRK. Was initially proposed to be required in complex with DOCK1 to activate Rac Rho small GTPases. May enhance the guanine nucleotide exchange factor (GEF) activity of DOCK1. This is Engulfment and cell motility protein 2 (ELMO2) from Homo sapiens (Human).